We begin with the raw amino-acid sequence, 601 residues long: MCGIVGYIGYDNAKELLLKGLEKLEYRGYDSAGIAVVNDDNTTVFKEKGRIAELRKVADSSDFDGPVGIGHTRWATHGVPNHENSHPHQSSNGRFTLVHNGVIENYEELKGEYLQGVSFISETDTEVIVQLVEYFSNQGLSTEEAFTKVVSLLHGSYALGLLDAEDKDTIYVAKNKSPLLLGVGEGFNVIASDALAMLQVTSEYKEIHDHEIVIVKKDEVIIKDADGNVVERDSYIAEIDASDAEKGVYAHYMLKEIHEQPAVMRRIIQEYQDAEGNLKIDQDIINDVKEADRIYVIAAGTSYHAGLVGKEFLEKWAGVPTEVHVASEFVYNMPLLSEKPLFVYISQSGETADSRAVLVETNKLGHKSLTITNVAGSTLSREADHTLLLHAGPEIAVASTKAYTAQIAVLSILSQIVAKEHGREADIDLLRELAKVTTAIEAIVDDAPIMEQIATDFLETTRNAFFIGRTIDYNVSLEGALKLKEISYIQAEGFAGGELKHGTIALIEEGTPVVGLATQEKVNLSIRGNVKEVVARGAHPCIISMEGLEKEGDTYVIPHVHELLTPLVSVVTLQLISYYAALHRDLDVDKPRNLAKSVTVE.

Cys2 functions as the Nucleophile; for GATase activity in the catalytic mechanism. One can recognise a Glutamine amidotransferase type-2 domain in the interval 2-218 (CGIVGYIGYD…DHEIVIVKKD (217 aa)). SIS domains lie at 284–423 (IIND…EHGR) and 453–591 (IATD…VDKP). Lys596 functions as the For Fru-6P isomerization activity in the catalytic mechanism.

Homodimer.

Its subcellular location is the cytoplasm. It carries out the reaction D-fructose 6-phosphate + L-glutamine = D-glucosamine 6-phosphate + L-glutamate. Catalyzes the first step in hexosamine metabolism, converting fructose-6P into glucosamine-6P using glutamine as a nitrogen source. The protein is Glutamine--fructose-6-phosphate aminotransferase [isomerizing] of Staphylococcus aureus (strain MRSA252).